Consider the following 245-residue polypeptide: Probable phosphatase YPTB2019 (245 aa).

The Zn(2+) site is built by His7, His9, His15, His40, Glu73, His101, His131, Asp192, and His194.

It belongs to the PHP family. Homotrimer. Requires Zn(2+) as cofactor.

This chain is Probable phosphatase YPTB2019, found in Yersinia pseudotuberculosis serotype I (strain IP32953).